A 109-amino-acid chain; its full sequence is Mitochondrial pyruvate carrier 1 (109 aa).

A2 bears the N-acetylalanine mark. The Mitochondrial matrix segment spans residues 2 to 20; it reads AGALVRKAADYVRSKDFRD. A helical transmembrane segment spans residues 21 to 41; sequence YLMSTHFWGPVANWGLPIAAI. Residues 42–52 lie on the Mother cell cytoplasmic side of the membrane; the sequence is NDMKKSPEIIS. Residues 53 to 71 traverse the membrane as a helical segment; it reads GRMTFALCCYSLTFMRFAY. At K72 the chain carries N6-acetyllysine. At 72–109 the chain is on the mitochondrial matrix side; that stretch reads KVQPRNWLLFACHATNEVAQLIQGGRLIRHEMSKKASA.

In terms of assembly, homodimer. Forms heterodimer with MPC2. The heterodimer is the more stable and dominant form.

It localises to the mitochondrion inner membrane. It catalyses the reaction pyruvate(out) + H(+)(out) = pyruvate(in) + H(+)(in). Functionally, mediates the uptake of pyruvate into mitochondria. The chain is Mitochondrial pyruvate carrier 1 (MPC1) from Bos taurus (Bovine).